Here is a 1054-residue protein sequence, read N- to C-terminus: MTDKVRIYDIAREMGRDSRDVLEVCEQLGIPFKTHSSTISPEQAELVRSKLGAPHIVKPPRPRPKPPSESLPPEPPAEAKVGERPQQKVPGTASAIVGIRRPAPAQQPAPVGEAKTAETLPAAKPSLSRPERVSPEKGSAGGAQLIGPPRRQVTPLVRSSEATQKPETVSQPATPPTPSESAAAKASGSEPSPVAKRPIVLSPPQRATSGTKPPAERPEPPQKAPEPSRPSPSEAPSPSHARVPQPAEEKAPSPPPAQRPRPQLVSAPVRPGTRSPATKEDSVSSGKAGEAPRPQRRMELVGPPTRPVAKPAPPEPDAASPLPERIPGERPSPVLVEAPVRPTPPKVKRKTEEEEDDELQALSRRAARVQAKRKRSRRRGEGDGDGLDLDPMTIISAVKQAELNALKPLARPTAKPPSYRPPAATAAPPARPRPAARLQQQPTSAEAGAADRASGTEPLPEEKVLLLDGSLTVQELAHRLRVAETEIIKTLFFKGVMVTINQVLDESLAESVAKELGYEIRRPKAEPEAKKTEMLDVEDIDHLVSRPPVVTIMGHVDHGKTTLLDAIRDTKVAQGEAGGITQRIGAYHVDVNFEGQKRRIVFLDTPGHQAFTAMRARGARVTDIAVLVVAADDGVQPQTLEAISHARAAQVPIIVAINKIDKPGSQPERIKQQLAEHGLLPEEWGGDTPMVEVSALTRRNLDALLEMILLVADVAELQANPNRPARGTVIEAHLDKARGPVATLLVQNGTLRVGDTLVAGAVLGRVKAMMDDRGQRLQEAGPSSAVQLLGLDEVPAAGDEFQVYTDEKEARRIAQERAEVLRQTRLQQALLSRRVSLGSVSAKAQEGQLKELNLIIKTDVQGSAEAIQTALRDLPQEEVQLRVLLAAPGEITETDVDLAAASDAIILGFNTTLAPGARQAADDKGVDVREYDIIYNLLDDLRAAMEGLLEPEEVEEPLGQAEVRLVIPIGRGAVAGSYVLSGKVQRNALVRVRRRGEVVYEGRLDSLKRFKDDVREVAAGFECGIGIDKFQSWQEGDIIEVYQMVTKRRTLASV.

2 disordered regions span residues 48 to 390 and 409 to 458; these read RSKL…LDLD and LARP…GTEP. Residues 65-76 show a composition bias toward pro residues; sequence KPPSESLPPEPP. Over residues 160 to 169 the composition is skewed to polar residues; the sequence is SEATQKPETV. Residues 179-193 are compositionally biased toward low complexity; that stretch reads SESAAAKASGSEPSP. Composition is skewed to pro residues over residues 221-235 and 304-316; these read PQKAPEPSRPSPSEA and PTRPVAKPAPPEP. Over residues 365 to 378 the composition is skewed to basic residues; the sequence is RAARVQAKRKRSRR. Low complexity predominate over residues 421 to 437; the sequence is PPAATAAPPARPRPAAR. The tr-type G domain occupies 545-718; the sequence is SRPPVVTIMG…LLVADVAELQ (174 aa). A G1 region spans residues 554–561; it reads GHVDHGKT. 554 to 561 contacts GTP; the sequence is GHVDHGKT. The segment at 579 to 583 is G2; the sequence is GITQR. The segment at 604–607 is G3; sequence DTPG. GTP is bound by residues 604 to 608 and 658 to 661; these read DTPGH and NKID. Residues 658–661 are G4; the sequence is NKID. The interval 694-696 is G5; the sequence is SAL.

The protein belongs to the TRAFAC class translation factor GTPase superfamily. Classic translation factor GTPase family. IF-2 subfamily.

It localises to the cytoplasm. Functionally, one of the essential components for the initiation of protein synthesis. Protects formylmethionyl-tRNA from spontaneous hydrolysis and promotes its binding to the 30S ribosomal subunits. Also involved in the hydrolysis of GTP during the formation of the 70S ribosomal complex. This Synechococcus sp. (strain JA-2-3B'a(2-13)) (Cyanobacteria bacterium Yellowstone B-Prime) protein is Translation initiation factor IF-2.